We begin with the raw amino-acid sequence, 442 residues long: tRNA modification GTPase MnmE (442 aa).

(6S)-5-formyl-5,6,7,8-tetrahydrofolate contacts are provided by Arg-27, Glu-84, and Lys-124. The region spanning 221-366 (GLHVVIVGAP…LLDALQAFAE (146 aa)) is the TrmE-type G domain. GTP-binding positions include 231-236 (NAGKSS), 250-256 (SKEAGTT), and 275-278 (DTAG). Mg(2+) is bound by residues Ser-235 and Thr-256. Lys-442 serves as a coordination point for (6S)-5-formyl-5,6,7,8-tetrahydrofolate.

It belongs to the TRAFAC class TrmE-Era-EngA-EngB-Septin-like GTPase superfamily. TrmE GTPase family. As to quaternary structure, homodimer. Heterotetramer of two MnmE and two MnmG subunits. Requires K(+) as cofactor.

The protein localises to the cytoplasm. Its function is as follows. Exhibits a very high intrinsic GTPase hydrolysis rate. Involved in the addition of a carboxymethylaminomethyl (cmnm) group at the wobble position (U34) of certain tRNAs, forming tRNA-cmnm(5)s(2)U34. This Brucella canis (strain ATCC 23365 / NCTC 10854 / RM-666) protein is tRNA modification GTPase MnmE.